The chain runs to 662 residues: ATP-dependent RNA helicase DDX3X (662 aa).

Ser-2 bears the N-acetylserine mark. Positions 2–139 (SHVAVENALG…KSDEDDWSKP (138 aa)) are required for TBK1 and IKBKE-dependent IFNB1 activation. The short motif at 12–21 (LDQQFAGLDL) is the Nuclear export signal element. Residues 19–144 (LDLNSSDNQS…DWSKPLPPSE (126 aa)) form a disordered region. Residues 21–34 (LNSSDNQSGGSTAS) are compositionally biased toward polar residues. Residues 38-44 (YIPPHLR) are interaction with EIF4E. Over residues 44–68 (RNREATKGFYDKDSSGWSSSKDKDA) the composition is skewed to basic and acidic residues. At Lys-55 the chain carries N6-acetyllysine. A phosphoserine mark is found at Ser-82 and Ser-90. Residues 94 to 130 (GRFDDRGRGDYDGIGGRGDRSGFGKFERGGNSRWCDK) are compositionally biased toward basic and acidic residues. Residues 100–110 (GRGDYDGIGGR) form an interaction with IKBKE region. Positions 100–662 (GRGDYDGIGG…NSQGVDWWGN (563 aa)) are interaction with GSK3B. Arg-101 bears the Omega-N-methylarginine mark. Phosphotyrosine is present on Tyr-104. Residue Arg-110 is modified to Omega-N-methylarginine. Lys-118 is subject to N6-acetyllysine. Ser-131 is subject to Phosphoserine. The interval 139–172 (PLPPSERLEQELFSGGNTGINFEKYDDIPVEATG) is interaction with CHUK. A Q motif motif is present at residues 180 to 208 (ESFSDVEMGEIIMGNIELTRYTRPTPVQK). Ser-183 carries the post-translational modification Phosphoserine. Residue 200–207 (YTRPTPVQ) coordinates ATP. One can recognise a Helicase ATP-binding domain in the interval 211–403 (IPIIKEKRDL…RDFLDEYIFL (193 aa)). Lys-215 participates in a covalent cross-link: Glycyl lysine isopeptide (Lys-Gly) (interchain with G-Cter in SUMO2). Position 224–231 (224–231 (AQTGSGKT)) interacts with ATP. The segment at 250–259 (ALRAMKENGR) is involved in stimulation of ATPase activity by DNA and RNA, nucleic acid binding and unwinding. Positions 347–350 (DEAD) match the DEAD box motif. The 162-residue stretch at 414–575 (NITQKVVWVE…EVPSWLENMA (162 aa)) folds into the Helicase C-terminal domain. A Phosphoserine modification is found at Ser-456. The interaction with NXF1 stretch occupies residues 536 to 661 (GNLGLATSFF…YNSQGVDWWG (126 aa)). Position 592 is an omega-N-methylarginine (Arg-592). A phosphoserine mark is found at Ser-594, Ser-605, and Ser-612. Positions 601 to 633 (DYRQSSGASSSSFSSSRASSSRSGGGGHGGSRG) are disordered. The segment covering 604–622 (QSSGASSSSFSSSRASSSR) has biased composition (low complexity). Residues Arg-617 and Arg-632 each carry the omega-N-methylarginine modification. Over residues 623 to 633 (SGGGGHGGSRG) the composition is skewed to gly residues.

Belongs to the DEAD box helicase family. DDX3/DED1 subfamily. In terms of assembly, homodimer; can bind RNA as a monomer and as a dimer/oligomer. Interacts with TDRD3. When phosphorylated, interacts with IRF3; the interaction facilitates the phosphorylation and activation of IRF3 by IKBKE. Directly interacts with XPO1/CRM1. The interaction with XPO1/CMR1 is dependent on the DDX3X nuclear export signal motif and XPO1 interaction with GTPase RAN in its active GTP-bound form. Weakly interacts with TBKBP1/SINTBAD. Directly interacts with TRAF3; this interaction stimulates TRAF3 'Lys-63' ubiquitination. Interacts with CSNK1E in a Wnt-dependent manner; this interaction greatly enhances CSNK1E affinity for ATP, stimulates its kinase activity and promotes CSNK1E-mediated DVL2 phosphorylation. In the presence of RNA, the interaction is decreased. Also interacts with CSNK1D and stimulates its kinase activity. Interacts with TRPV4; this interaction is decreased when the TRPV4 channel is activated, leading to DDX3X relocalization to the nucleus. Interacts with MAP3K14/NIK. Directly interacts with CHUK/IKKA after physiological activation of the TLR7 and TLR8 pathways; this interaction enhances CHUK autophosphorylation. May associate with EIF4F complex, composed of at least EIF4A, EIF4E and EIF4G1/EIF4G3. Directly interacts with EIF4E in an RNA-independent manner; this interaction enhances EIF4E cap-binding ability. Directly interacts with EIF4G1 in an RNA-independent manner. DDX3X competes with EIF4G1 for interaction with EIF4E. Interacts with EIF4A1 and EIF2S1 in an RNA-independent manner. Associates with the eukaryotic translation initiation factor 3 (eIF-3) complex, including with EIF3B and EIF3C subunits. Directly interacts with IKBKE/IKKE; this interaction stimulates IKBKE activating autophosphorylation and is induced upon viral infection. Interacts with TBK1. Interacts with SP1; this interaction potentiates SP1-induced CDKN1A/WAF1/CIP1 transcription. Interacts with GSK3A and GSK3B. Interacts with several death receptors, inclusing FAS, TNFRSF10A and TNFRSF10B. Recruited to TNFRSF10B in the absence of receptor stimulation. When TNFRSF10B is stimulated, further recruited to the receptor and cleaved by caspases. A large proteolytic fragment remains associated with TNFRSF10B. Interacts (via C-terminus) with NXF1/TAP; this interaction may be partly involved in DDX3X nuclear export and in NXF1 localization to stress granules. Identified in an mRNP complex, composed of at least DHX9, DDX3X, ELAVL1, HNRNPU, IGF2BP1/2, ILF3, PABPC1, PCBP2, PTBP2, STAU1, STAU2, SYNCRIP and YBX1. The interaction with IGF2BP1/2 is RNA-dependent. Directly interacts with PABPC1/PABP1 in an RNA-independent manner. This interaction increases in stressed cells and decreases during cell recovery. Interacts (via C-terminus) with MAVS/IPS-1; this interaction potentiates MAVS-mediated IFNB induction. Interacts with ERCC6/CBS. Interacts with DHX33 in an RNA-independent manner. Interacts with DDX5 in the cytoplasm; this interaction may be more efficient when both proteins are unphosphorylated. Interacts with RIGI. Interacts with IFIH1/MDA5. Interacts with NCAPH; this interaction may be important for the NCAPH localization at condensing chromosomes during mitosis. Interacts with NLRP3 (via NACHT domain) under inflammasome-activating conditions. Interacts with CAPRIN1. Interacts with HNF4A and NR0B2/SHP in an RNA-independent manner; this interaction disrupts the interaction between HNF4 and NR0B2 that forms inactive heterodimers and enhances the formation of active HNF4 homodimers. Interacts with CREBBP/CBP. Interacts with EP300/p300. Interacts with gamma-tubulin. Interacts with phosphorylated TP53. Directly interacts with RELA/p65; this interaction may trap RELA in the cytoplasm, impairing nuclear relocalization upon TNF activating signals. Post-translationally, phosphorylated by TBK1; the phosphorylation is required for the synergistic induction of IFNB mediated by TBK1 and DDX3X. Phosphorylated by IKBKE. Also phosphorylated by CSNK1E; this phosphorylation may inhibit RNA-stimulated ATPase activity. In terms of processing, upon stimulation of death receptors, including TNFRSF10B, recruited to receptors and cleaved by caspases. Proteolytic fragments remain associated with the receptors. This cleavage presumably inactivates DDX3X anti-apoptotic function. Ubiquitinated by RNF39 via 'Lys-48'-linked ubiquitination; leading to proteasomal degradation. Expressed in ovary, including in germinal vesicle immature and metaphase II (MII) stage oocytes (at protein level). In the brain, expressed in the granule cells of the cerebellum and dentate gyrus, the pyramidal cells of the hippocampus, the ependymal cells lining the ventricles, choroid plexi and olfactory bulb. Also accumulates in the thalamic nuclei, the dorsal region of the colliculi and the pontine nucleus.

It is found in the cell membrane. The protein localises to the nucleus. The protein resides in the cytoplasm. Its subcellular location is the stress granule. It localises to the inflammasome. It is found in the cell projection. The protein localises to the lamellipodium. It catalyses the reaction ATP + H2O = ADP + phosphate + H(+). Functionally, multifunctional ATP-dependent RNA helicase. The ATPase activity can be stimulated by various ribo-and deoxynucleic acids indicative for a relaxed substrate specificity. In vitro can unwind partially double-stranded DNA with a preference for 5'-single-stranded DNA overhangs. Binds RNA G-quadruplex (rG4s) structures, including those located in the 5'-UTR of NRAS mRNA. Involved in many cellular processes, which do not necessarily require its ATPase/helicase catalytic activities. Involved in transcription regulation. Positively regulates CDKN1A/WAF1/CIP1 transcription in an SP1-dependent manner, hence inhibits cell growth. This function requires its ATPase, but not helicase activity. CDKN1A up-regulation may be cell-type specific. Binds CDH1/E-cadherin promoter and represses its transcription. Potentiates HNF4A-mediated MTTP transcriptional activation; this function requires ATPase, but not helicase activity. Facilitates HNF4A acetylation, possibly catalyzed by CREBBP/EP300, thereby increasing the DNA-binding affinity of HNF4 to its response element. In addition, disrupts the interaction between HNF4 and SHP that forms inactive heterodimers and enhances the formation of active HNF4 homodimers. By promoting HNF4A-induced MTTP expression, may play a role in lipid homeostasis. May positively regulate TP53 transcription. Associates with mRNPs, predominantly with spliced mRNAs carrying an exon junction complex (EJC). Involved in the regulation of translation initiation. Not involved in the general process of translation, but promotes efficient translation of selected complex mRNAs, containing highly structured 5'-untranslated regions (UTR). This function depends on helicase activity. Might facilitate translation by resolving secondary structures of 5'-UTRs during ribosome scanning. Alternatively, may act prior to 43S ribosomal scanning and promote 43S pre-initiation complex entry to mRNAs exhibiting specific RNA motifs, by performing local remodeling of transcript structures located close to the cap moiety. Independently of its ATPase activity, promotes the assembly of functional 80S ribosomes and disassembles from ribosomes prior to the translation elongation process. Positively regulates the translation of cyclin E1/CCNE1 mRNA and consequently promotes G1/S-phase transition during the cell cycle. May activate TP53 translation. Required for endoplasmic reticulum stress-induced ATF4 mRNA translation. Independently of its ATPase/helicase activity, enhances IRES-mediated translation; this activity requires interaction with EIF4E. Independently of its ATPase/helicase activity, has also been shown specifically repress cap-dependent translation, possibly by acting on translation initiation factor EIF4E. Involved in innate immunity, acting as a viral RNA sensor. Binds viral RNAs and promotes the production of type I interferon (IFN-alpha and IFN-beta). Potentiate MAVS/RIGI-mediated induction of IFNB in early stages of infection. Enhances IFNB1 expression via IRF3/IRF7 pathway and participates in NFKB activation in the presence of MAVS and TBK1. Involved in TBK1 and IKBKE-dependent IRF3 activation leading to IFNB induction, acts as a scaffolding adapter that links IKBKE and IRF3 and coordinates their activation. Involved in the TLR7/TLR8 signaling pathway leading to type I interferon induction, including IFNA4 production. In this context, acts as an upstream regulator of IRF7 activation by MAP3K14/NIK and CHUK/IKKA. Stimulates CHUK autophosphorylation and activation following physiological activation of the TLR7 and TLR8 pathways, leading to MAP3K14/CHUK-mediated activatory phosphorylation of IRF7. Also stimulates MAP3K14/CHUK-dependent NF-kappa-B signaling. Negatively regulates TNF-induced IL6 and IL8 expression, via the NF-kappa-B pathway. May act by interacting with RELA/p65 and trapping it in the cytoplasm. May also bind IFNB promoter; the function is independent of IRF3. Involved in both stress and inflammatory responses. Independently of its ATPase/helicase activity, required for efficient stress granule assembly through its interaction with EIF4E, hence promotes survival in stressed cells. Independently of its helicase activity, regulates NLRP3 inflammasome assembly through interaction with NLRP3 and hence promotes cell death by pyroptosis during inflammation. This function is independent of helicase activity. Therefore DDX3X availability may be used to interpret stress signals and choose between pro-survival stress granules and pyroptotic NLRP3 inflammasomes and serve as a live-or-die checkpoint in stressed cells. In association with GSK3A/B, negatively regulates extrinsic apoptotic signaling pathway via death domain receptors, including TNFRSF10B, slowing down the rate of CASP3 activation following death receptor stimulation. Cleavage by caspases may inactivate DDX3X and relieve the inhibition. Independently of its ATPase/helicase activity, allosteric activator of CSNK1E. Stimulates CSNK1E-mediated phosphorylation of DVL2, thereby involved in the positive regulation of Wnt/beta-catenin signaling pathway. Also activates CSNK1A1 and CSNK1D in vitro, but it is uncertain if these targets are physiologically relevant. ATPase and casein kinase-activating functions are mutually exclusive. May be involved in mitotic chromosome segregation. This is ATP-dependent RNA helicase DDX3X (Ddx3x) from Mus musculus (Mouse).